Consider the following 232-residue polypeptide: uncharacterized protein (232 aa).

This is an uncharacterized protein from Aedes vexans (Inland floodwater mosquito).